The chain runs to 271 residues: Phosphate import ATP-binding protein PstB (271 aa).

The ABC transporter domain maps to 24 to 266 (MIGQDVSVYY…PDDPRTQDYI (243 aa)). An ATP-binding site is contributed by 56 to 63 (GPSGCGKS).

This sequence belongs to the ABC transporter superfamily. Phosphate importer (TC 3.A.1.7) family. In terms of assembly, the complex is composed of two ATP-binding proteins (PstB), two transmembrane proteins (PstC and PstA) and a solute-binding protein (PstS).

It is found in the cell inner membrane. The catalysed reaction is phosphate(out) + ATP + H2O = ADP + 2 phosphate(in) + H(+). Part of the ABC transporter complex PstSACB involved in phosphate import. Responsible for energy coupling to the transport system. The polypeptide is Phosphate import ATP-binding protein PstB (Rhizobium etli (strain ATCC 51251 / DSM 11541 / JCM 21823 / NBRC 15573 / CFN 42)).